The chain runs to 285 residues: Probable endonuclease 4 (285 aa).

Residues H69, H109, E145, D179, H182, H216, D229, H231, and E261 each contribute to the Zn(2+) site.

This sequence belongs to the AP endonuclease 2 family. Requires Zn(2+) as cofactor.

The enzyme catalyses Endonucleolytic cleavage to 5'-phosphooligonucleotide end-products.. Endonuclease IV plays a role in DNA repair. It cleaves phosphodiester bonds at apurinic or apyrimidinic (AP) sites, generating a 3'-hydroxyl group and a 5'-terminal sugar phosphate. This is Probable endonuclease 4 from Salmonella typhi.